Reading from the N-terminus, the 284-residue chain is 4-hydroxybenzoate octaprenyltransferase (284 aa).

A run of 9 helical transmembrane segments spans residues 19–39 (IGSL…AQGL), 42–62 (LRVL…GCVI), 93–113 (LLLF…MNTL), 114–134 (TIQL…MKRF), 136–156 (HLPQ…AWAA), 158–178 (ANTL…WTIA), 210–230 (IIGL…QGLA), 233–253 (TSYY…QHLI), and 264–284 (AFLN…LSVW).

The protein belongs to the UbiA prenyltransferase family. Requires Mg(2+) as cofactor.

The protein resides in the cell inner membrane. It carries out the reaction all-trans-octaprenyl diphosphate + 4-hydroxybenzoate = 4-hydroxy-3-(all-trans-octaprenyl)benzoate + diphosphate. It participates in cofactor biosynthesis; ubiquinone biosynthesis. Its function is as follows. Catalyzes the prenylation of para-hydroxybenzoate (PHB) with an all-trans polyprenyl group. Mediates the second step in the final reaction sequence of ubiquinone-8 (UQ-8) biosynthesis, which is the condensation of the polyisoprenoid side chain with PHB, generating the first membrane-bound Q intermediate 3-octaprenyl-4-hydroxybenzoate. The polypeptide is 4-hydroxybenzoate octaprenyltransferase (Vibrio cholerae serotype O1 (strain ATCC 39541 / Classical Ogawa 395 / O395)).